The following is a 269-amino-acid chain: MQLPANPFKAALRRAEPLYGIWAGFATPYAAEIIATTGYDWMLVDGEHAPNTVPTLLGQLQAVAPYATHPVVRAVQGDTVLIKQLLDVGVQTLMVPMVETAEQARELVRAMRYPPHGVRGVGGGLTRATRWDAVPDYIRTAHEQLCLIVQIESPRGVAHAAEIAAVEGVDAVFIGPADLSTGMGHAGDASQGEVQEAIRRTVQATLAAGKACGILAPREEDARRYADWGCRFIAVGIDISLLRQAALANLGRYRATQATDQAAPASRTY.

Catalysis depends on His-48, which acts as the Proton acceptor. A divalent metal cation contacts are provided by Glu-152 and Asp-178.

The protein belongs to the HpcH/HpaI aldolase family. A divalent metal cation serves as cofactor.

The enzyme catalyses D-glyceraldehyde + pyruvate = 2-dehydro-3-deoxy-L-galactonate. Aldolase which can catalyze in vitro the aldolisation reaction between hydroxypyruvate (HPA) or pyruvate (PA) and D-glyceraldehyde (D-GA). The condensation of pyruvate and D-glyceraldehyde produces 2-dehydro-3-deoxy-L-galactonate as the major product. Has weak activity with hydroxypyruvate and D-glyceraldehyde. The polypeptide is Hydroxypyruvate/pyruvate aldolase (Delftia acidovorans (strain DSM 14801 / SPH-1)).